The primary structure comprises 284 residues: Stomatin (284 aa).

The Cytoplasmic portion of the chain corresponds to 1 to 31; the sequence is MSDKRQSSHVQSQRIPESFRENSKTELGACG. Residue S18 is modified to Phosphoserine. C30 carries S-palmitoyl cysteine lipidation. Residues 32-52 lie within the membrane without spanning it; sequence WILVAASFFFVIITFPISIWI. Topologically, residues 53-284 are cytoplasmic; that stretch reads CIKIVKEYER…MLQGIMGSNH (232 aa). C87 is lipidated: S-palmitoyl cysteine. Phosphoserine occurs at positions 161 and 244. Residues 265 to 273 are required for homooligomerization; sequence STIVFPLPV. Positions 267–269 are required for lipid raft association; it reads IVF. Positions 273-284 are interaction with LANCL1; that stretch reads VDMLQGIMGSNH.

It belongs to the band 7/mec-2 family. In terms of assembly, interacts with LANCL1. Interacts with SLC2A1. Interacts with SLC4A1; this interaction positively regulates SLC4A1 activity. Identified in large complexes with SLC40A1, SLC14A1, SLC29A1 and AQP1. Homodimer and higher order homooligomers. The homodimer is banana-shaped. Interacts with ASIC1, ASIC2 and ASIC3. Interacts with STOML1; may redistribute STOM from the plasma membrane to late endosomes. In terms of tissue distribution, expressed in all sensory neurons of the dorsal root ganglia. In the CNS, expressed in many neurons of the spinal cord, medulla and pons. Expressed only in scattered neurons in the cortex, hippocampus, thalamus and basal ganglia. In the cerebellum, expressed in all Purkinje cells (at protein level). Widely expressed with high levels in heart, liver, skeletal muscle and testis and low levels in lung, brain and spleen.

Its subcellular location is the cell membrane. The protein resides in the cytoplasm. The protein localises to the cytoskeleton. It localises to the membrane raft. It is found in the melanosome. Its subcellular location is the cytoplasmic vesicle. Its function is as follows. Regulates ion channel activity and transmembrane ion transport. Regulates ASIC2 and ASIC3 channel activity. This Mus musculus (Mouse) protein is Stomatin.